We begin with the raw amino-acid sequence, 476 residues long: MSAVLKSPADSAIADISLADWGRKEIRIAETEMPGLMAIREEFAAKQPLKGARITGSLHMTIQTAVLIETLKALGADVRWASCNIFSTQDHAAAAIAATGTPVFAIKGETLVDYWDYTHRIFDFGPKGSEGEGPNMILDDGGDATLLMHLGKRAEKDASVLAHPGSEEERILFAAIKAKLAEDSTWYSRKSAQIIGVTEETTTGVHRLKEMSAKGTLLFRAINVNDSVTKSKFDNLYGCRESLVDGIKRATDVMIAGKVAVVAGYGDVGKGSAQALRALSAQVWVTEIDPINALQAAMEGFKVVTMEWAADKADIFVTTTGNRDVITFEHMKAMKDQAIVCNIGHFDNEIQVAKLEEHCQWEEIKPQVDHVIFPDGKRIILLAKGRLVNLGCGTGHPSFVMSNSFANQTIAQIELFTHPEGYDVGKVYVLPKHLDEKVARLHLKKVGAMLTELSDEQAAYIGVPKQGPYKPDTYRY.

Substrate-binding residues include T61, D140, and E200. 201 to 203 (TTT) serves as a coordination point for NAD(+). K230 and D234 together coordinate substrate. NAD(+)-binding positions include N235, 264 to 269 (GYGDVG), E287, N322, 343 to 345 (IGH), and N389.

It belongs to the adenosylhomocysteinase family. NAD(+) is required as a cofactor.

Its subcellular location is the cytoplasm. The catalysed reaction is S-adenosyl-L-homocysteine + H2O = L-homocysteine + adenosine. The protein operates within amino-acid biosynthesis; L-homocysteine biosynthesis; L-homocysteine from S-adenosyl-L-homocysteine: step 1/1. May play a key role in the regulation of the intracellular concentration of adenosylhomocysteine. In Acidovorax sp. (strain JS42), this protein is Adenosylhomocysteinase.